Here is a 703-residue protein sequence, read N- to C-terminus: Zinc finger protein 750 (703 aa).

Residues 25-51 form a CCHC-type zinc finger; it reads YKCFQCPFTCNEKSHLFNHMKYGLCKN. The Zn(2+) site is built by cysteine 27, cysteine 30, histidine 43, and cysteine 49. 4 disordered regions span residues 64–113, 350–527, 553–614, and 630–703; these read KCPK…DAKE, PASS…YGPM, WAPR…KQTA, and RVAD…TRVS. The segment covering 67 to 106 has biased composition (polar residues); sequence KSSSLDPKQTHQPEPTSKPATSKSLLNGLSSFDPKSQQGS. The span at 352 to 361 shows a compositional bias: low complexity; that stretch reads SSPSELNLSS. Residues 367–394 are compositionally biased toward basic and acidic residues; the sequence is TECEKGSPVPEAKDPSKDGQRDAEEAKM. 2 stretches are compositionally biased toward polar residues: residues 410-421 and 456-477; these read SPTNFTQTSQTF and GSES…SLQA. Over residues 574 to 611 the composition is skewed to basic and acidic residues; it reads TETKGSEDRTSRVETPQDKAHSRTTPDVHTEDSSDEQK. Residues 639-655 are compositionally biased toward polar residues; that stretch reads QEPTRQDVPTLSATENL.

It is found in the nucleus. Transcription factor involved in epidermis differentiation. Required for terminal epidermal differentiation: acts downstream of p63/TP63 and activates expression of late epidermal differentiation genes. Specifically binds to the promoter of KLF4 and promotes its expression. This chain is Zinc finger protein 750 (Znf750), found in Mus musculus (Mouse).